Reading from the N-terminus, the 351-residue chain is Histidinol-phosphate aminotransferase 1 (351 aa).

Lys-210 bears the N6-(pyridoxal phosphate)lysine mark.

Belongs to the class-II pyridoxal-phosphate-dependent aminotransferase family. Histidinol-phosphate aminotransferase subfamily. In terms of assembly, homodimer. Pyridoxal 5'-phosphate is required as a cofactor.

The catalysed reaction is L-histidinol phosphate + 2-oxoglutarate = 3-(imidazol-4-yl)-2-oxopropyl phosphate + L-glutamate. It functions in the pathway amino-acid biosynthesis; L-histidine biosynthesis; L-histidine from 5-phospho-alpha-D-ribose 1-diphosphate: step 7/9. In Pseudomonas aeruginosa (strain ATCC 15692 / DSM 22644 / CIP 104116 / JCM 14847 / LMG 12228 / 1C / PRS 101 / PAO1), this protein is Histidinol-phosphate aminotransferase 1 (hisC1).